The following is a 23-amino-acid chain: Alpha-amanitin proprotein (23 aa).

Position 1 is a (3R,4R)-4,5-dihydroxyisoleucine; in form alpha-amanitin (Ile1). The residue at position 1 (Ile1) is a (3R,4S)-4-hydroxyisoleucine; in form gamma-amanitin. Residues 1–8 constitute a cross-link (cyclopeptide (Ile-Pro)); that stretch reads IWGIGCNP. Positions 2-6 form a cross-link, 2'-cysteinyl-6'-hydroxytryptophan sulfoxide (Trp-Cys); it reads WGIGC. Position 8 is a 4-hydroxyproline (Pro8). A propeptide spanning residues 9–23 is cleaved from the precursor; the sequence is CVGDEVTALITRGEA.

The protein belongs to the MSDIN fungal toxin family. Post-translationally, processed by the macrocyclase-peptidase enzyme POPB to yield a toxic cyclic decapeptide. POPB first removes 10 residues from the N-terminus. Conformational trapping of the remaining peptide forces the enzyme to release this intermediate rather than proceed to macrocyclization. The enzyme rebinds the remaining peptide in a different conformation and catalyzes macrocyclization of the N-terminal 8 residues.

Its function is as follows. Major toxin belonging to the bicyclic octapeptides amatoxins that acts by binding non-competitively to RNA polymerase II and greatly slowing the elongation of transcripts from target promoters. This is Alpha-amanitin proprotein from Amanita fuligineoides.